Reading from the N-terminus, the 119-residue chain is Large ribosomal subunit protein bL20 (119 aa).

This sequence belongs to the bacterial ribosomal protein bL20 family.

In terms of biological role, binds directly to 23S ribosomal RNA and is necessary for the in vitro assembly process of the 50S ribosomal subunit. It is not involved in the protein synthesizing functions of that subunit. The sequence is that of Large ribosomal subunit protein bL20 from Streptococcus thermophilus (strain ATCC BAA-491 / LMD-9).